The primary structure comprises 127 residues: Large ribosomal subunit protein bL17 (127 aa).

It belongs to the bacterial ribosomal protein bL17 family. In terms of assembly, part of the 50S ribosomal subunit. Contacts protein L32.

In Lactobacillus helveticus (strain DPC 4571), this protein is Large ribosomal subunit protein bL17.